We begin with the raw amino-acid sequence, 664 residues long: DNA mismatch repair protein MutL (664 aa).

Belongs to the DNA mismatch repair MutL/HexB family.

Functionally, this protein is involved in the repair of mismatches in DNA. It is required for dam-dependent methyl-directed DNA mismatch repair. May act as a 'molecular matchmaker', a protein that promotes the formation of a stable complex between two or more DNA-binding proteins in an ATP-dependent manner without itself being part of a final effector complex. This is DNA mismatch repair protein MutL from Clostridium beijerinckii (strain ATCC 51743 / NCIMB 8052) (Clostridium acetobutylicum).